The chain runs to 927 residues: MDYKQTLNLPDTQFPMRGNLPKREPEILEKWQSMGLYEKMEEAGRTRPNFTLHDGPPYANGHIHIGHALNKILKDIVLKSRRMKGFYAPYVPGWDCHGLPIELMVDKKLGKKKRDMTKVEIRKECRVYADQWVKIQSEEFERLGVMGEWDRPYLTMTHHYEAVTARELARFVEKGGLFKGKKPIHWCSSCVTALAEAEVEYADHKSPSIYVKFPFDGELPAELNDLAGRKLSFVIWTTTPWTIPANLAVCLNPNLPYAVVETGDELLVMAEGLVSGVMQELGLENYRVLKTFEAPIFERKTCRHPFYDRPSLLILGDHVTLEAGTGCVHTAPGHGQDDYVVGLAYGLDVYNPVDNYGRYYEDVEFFGGMKINQANGAVNAKLTEVGALLKESEVSHSYPHCWRCKKPIIFRATEQWFISMEANGLREKALGHINDVNWVPRWGRDRIYNMVENRPDWCISRQRSWGVPITIFYCAKCGEALEDSKVMDYVADLFEEGGSDLWFDKPAKELMPAGTTCPGCGHDEFTKETDILDVWFDSGVSHAAVLDNRDYLSWPADLYLEGSDQHRGWFHSSLLASVGTRELTPYKSVLTHGFVVDGKGKKMSKSVGNVVAPEEVIKKYGAEILRLWVAAQDYRDDIRISNEILQRLSDAYRRIRNTARYILGNLSGFDPSRDMVADDQLLELDRWALAKLEDLAGRVEKAYEDYEFHIIYHAVHNFCSVEMSSFYLDVLKDRLYVSGTDSIARRSAQTAMYRILDCITRLIAPVLSFTAEEIWAFMPGERSESVHLGEFVQFPTSFRDAALEERYDNLLEIRSDVSKALELARNEKVIGHSLDARVLLSAPAGATLELLEKYRDQLASLFIVSQVELVDDLADGLTGENLPDLKVKVEKALGEKCERCWNYATSVGDSAEHPALCHRCVAVLTDR.

Positions 57–67 (PYANGHIHIGH) match the 'HIGH' region motif. An L-isoleucyl-5'-AMP-binding site is contributed by glutamate 561. The 'KMSKS' region signature appears at 602 to 606 (KMSKS). Position 605 (lysine 605) interacts with ATP. Residues cysteine 897, cysteine 900, cysteine 917, and cysteine 920 each contribute to the Zn(2+) site.

Belongs to the class-I aminoacyl-tRNA synthetase family. IleS type 1 subfamily. In terms of assembly, monomer. Zn(2+) is required as a cofactor.

It localises to the cytoplasm. It catalyses the reaction tRNA(Ile) + L-isoleucine + ATP = L-isoleucyl-tRNA(Ile) + AMP + diphosphate. Catalyzes the attachment of isoleucine to tRNA(Ile). As IleRS can inadvertently accommodate and process structurally similar amino acids such as valine, to avoid such errors it has two additional distinct tRNA(Ile)-dependent editing activities. One activity is designated as 'pretransfer' editing and involves the hydrolysis of activated Val-AMP. The other activity is designated 'posttransfer' editing and involves deacylation of mischarged Val-tRNA(Ile). The chain is Isoleucine--tRNA ligase from Syntrophotalea carbinolica (strain DSM 2380 / NBRC 103641 / GraBd1) (Pelobacter carbinolicus).